Consider the following 94-residue polypeptide: Co-chaperonin GroES (94 aa).

Belongs to the GroES chaperonin family. Heptamer of 7 subunits arranged in a ring. Interacts with the chaperonin GroEL.

Its subcellular location is the cytoplasm. Together with the chaperonin GroEL, plays an essential role in assisting protein folding. The GroEL-GroES system forms a nano-cage that allows encapsulation of the non-native substrate proteins and provides a physical environment optimized to promote and accelerate protein folding. GroES binds to the apical surface of the GroEL ring, thereby capping the opening of the GroEL channel. The sequence is that of Co-chaperonin GroES from Streptococcus pneumoniae (strain Taiwan19F-14).